Consider the following 581-residue polypeptide: Arginine--tRNA ligase (581 aa).

A 'HIGH' region motif is present at residues 122-132 (PNVAKPMHVGH).

It belongs to the class-I aminoacyl-tRNA synthetase family. In terms of assembly, monomer.

It localises to the cytoplasm. The catalysed reaction is tRNA(Arg) + L-arginine + ATP = L-arginyl-tRNA(Arg) + AMP + diphosphate. This chain is Arginine--tRNA ligase, found in Francisella tularensis subsp. novicida (strain U112).